Reading from the N-terminus, the 288-residue chain is Acetyl-coenzyme A carboxylase carboxyl transferase subunit beta, chloroplastic (288 aa).

One can recognise a CoA carboxyltransferase N-terminal domain in the interval 30-288 (LWIKCFDCGL…QILSLHNHSK (259 aa)). The Zn(2+) site is built by Cys-34, Cys-37, Cys-53, and Cys-56. The C4-type zinc-finger motif lies at 34–56 (CFDCGLLMYSKVLKRNLKVCPQC).

This sequence belongs to the AccD/PCCB family. Acetyl-CoA carboxylase is a heterohexamer composed of biotin carboxyl carrier protein, biotin carboxylase and 2 subunits each of ACCase subunit alpha and ACCase plastid-coded subunit beta (accD). Requires Zn(2+) as cofactor.

The protein localises to the plastid. The protein resides in the chloroplast stroma. The catalysed reaction is N(6)-carboxybiotinyl-L-lysyl-[protein] + acetyl-CoA = N(6)-biotinyl-L-lysyl-[protein] + malonyl-CoA. It functions in the pathway lipid metabolism; malonyl-CoA biosynthesis; malonyl-CoA from acetyl-CoA: step 1/1. In terms of biological role, component of the acetyl coenzyme A carboxylase (ACC) complex. Biotin carboxylase (BC) catalyzes the carboxylation of biotin on its carrier protein (BCCP) and then the CO(2) group is transferred by the transcarboxylase to acetyl-CoA to form malonyl-CoA. The polypeptide is Acetyl-coenzyme A carboxylase carboxyl transferase subunit beta, chloroplastic (Pyropia yezoensis (Susabi-nori)).